The sequence spans 345 residues: D-amino-acid oxidase (345 aa).

FAD contacts are provided by serine 10, isoleucine 13, serine 49, glycine 53, and asparagine 55. 2 residues coordinate (R)-lactate: tyrosine 230 and arginine 290. 2 residues coordinate anthranilate: tyrosine 230 and arginine 290. Arginine 290, serine 317, glycine 320, tyrosine 321, and glutamine 322 together coordinate FAD. Positions 343–345 match the Microbody targeting signal motif; the sequence is AKL.

This sequence belongs to the DAMOX/DASOX family. The cofactor is FAD.

Its subcellular location is the peroxisome matrix. It catalyses the reaction a D-alpha-amino acid + O2 + H2O = a 2-oxocarboxylate + H2O2 + NH4(+). The enzyme catalyses D-methionine + O2 + H2O = 4-methylsulfanyl-2-oxobutanoate + H2O2 + NH4(+). Catalyzes the oxidative deamination of D-amino acids with broad substrate specificity. Enables the organism to utilize D-amino acids as a source of nutrients. Enables the organism to utilize D-alanine as a nitrogen source, although it is not strictly required for this process. Also enables utilization of D-alanine as a carbon source. In Candida boidinii (Yeast), this protein is D-amino-acid oxidase.